The following is a 539-amino-acid chain: Phosphoenolpyruvate carboxykinase (ATP) (539 aa).

Arg64, Tyr206, and Lys212 together coordinate substrate. Residues Lys212, His231, and 247 to 255 (GLSGTGKTT) contribute to the ATP site. Mn(2+) is bound by residues Lys212 and His231. Position 268 (Asp268) interacts with Mn(2+). ATP is bound by residues Glu296, Arg332, 448 to 449 (RI), and Thr454. Residue Arg332 coordinates substrate.

Belongs to the phosphoenolpyruvate carboxykinase (ATP) family. Monomer. It depends on Mn(2+) as a cofactor.

The protein localises to the cytoplasm. It carries out the reaction oxaloacetate + ATP = phosphoenolpyruvate + ADP + CO2. Its pathway is carbohydrate biosynthesis; gluconeogenesis. Functionally, involved in the gluconeogenesis. Catalyzes the conversion of oxaloacetate (OAA) to phosphoenolpyruvate (PEP) through direct phosphoryl transfer between the nucleoside triphosphate and OAA. The chain is Phosphoenolpyruvate carboxykinase (ATP) from Pectobacterium carotovorum subsp. carotovorum (strain PC1).